The chain runs to 112 residues: Large ribosomal subunit protein uL22 (112 aa).

This sequence belongs to the universal ribosomal protein uL22 family. Part of the 50S ribosomal subunit.

In terms of biological role, this protein binds specifically to 23S rRNA; its binding is stimulated by other ribosomal proteins, e.g. L4, L17, and L20. It is important during the early stages of 50S assembly. It makes multiple contacts with different domains of the 23S rRNA in the assembled 50S subunit and ribosome. Its function is as follows. The globular domain of the protein is located near the polypeptide exit tunnel on the outside of the subunit, while an extended beta-hairpin is found that lines the wall of the exit tunnel in the center of the 70S ribosome. In Akkermansia muciniphila (strain ATCC BAA-835 / DSM 22959 / JCM 33894 / BCRC 81048 / CCUG 64013 / CIP 107961 / Muc), this protein is Large ribosomal subunit protein uL22.